Here is a 332-residue protein sequence, read N- to C-terminus: MVSVSVMGAGSWGTTLAKVFSDAGNAVTLWARREELASTIRDSHENRDYLPGITLPESLQVTSSATEALEGAAIVVLAIPSQALRGNLAEWKETIPQDATLVSLAKGIEKGTHLRMSEVIAEVTEADPSRIAVLSGPNLAREIAEGQPAATVIACPDENRAKLVQAAVAAPYFRPYTNTDVVGTEIGGACKNVIALACGISHGYGLGENTNASLITRGLAEIARLGATLGADAKTFSGLAGMGDLVATCSSPLSRNRSFGERLGQGESLEKAREATNGQVAEGVISSQSIFDLATKLGVEMPITQAVYGVCHRDMKVTDMIVALMGRSKKAE.

NADPH-binding residues include Ser11, Trp12, Arg32, Arg33, and Lys106. Residues Lys106 and Gly136 each coordinate sn-glycerol 3-phosphate. Ala140 serves as a coordination point for NADPH. The sn-glycerol 3-phosphate site is built by Lys191, Asp244, Ser254, Arg255, and Asn256. The active-site Proton acceptor is Lys191. An NADPH-binding site is contributed by Arg255. The NADPH site is built by Val280 and Glu282.

Belongs to the NAD-dependent glycerol-3-phosphate dehydrogenase family.

The protein resides in the cytoplasm. It carries out the reaction sn-glycerol 3-phosphate + NAD(+) = dihydroxyacetone phosphate + NADH + H(+). The catalysed reaction is sn-glycerol 3-phosphate + NADP(+) = dihydroxyacetone phosphate + NADPH + H(+). The protein operates within membrane lipid metabolism; glycerophospholipid metabolism. Its function is as follows. Catalyzes the reduction of the glycolytic intermediate dihydroxyacetone phosphate (DHAP) to sn-glycerol 3-phosphate (G3P), the key precursor for phospholipid synthesis. This is Glycerol-3-phosphate dehydrogenase [NAD(P)+] from Corynebacterium glutamicum (strain R).